The chain runs to 667 residues: Protein angel homolog 1 (667 aa).

A phosphoserine mark is found at serine 77 and serine 105.

The protein belongs to the CCR4/nocturin family.

The chain is Protein angel homolog 1 from Mus musculus (Mouse).